We begin with the raw amino-acid sequence, 276 residues long: FALAHMVNDFEILKSYLDEGANGIESDITFSDEGEPEYTFHGVPCDCRRWCDRSVGIDEYLQHLSDLTTPGNPKFRENLLVVVLDLKLNGLSQDALRQGGLRLADKLAAHYWTGNRKARAYFIISVPKTSESEFMRTFRKELDEINFGDMSAKIGFDFTDNGDFKETQKVYEGLGISEHIWASDGITNCIPLLFRGTDRLEDLTRQRDEPGYKYIDKVYAWTYDKETSVVKALELGVDGVMTNYADFVIKVLNKPEHSSKYRLATYDDNPFEKFTA.

Residue histidine 5 is part of the active site. Mg(2+)-binding residues include glutamate 25 and aspartate 27. The Nucleophile role is filled by histidine 41. 2 disulfides stabilise this stretch: cysteine 45–cysteine 51 and cysteine 47–cysteine 189. Aspartate 85 contributes to the Mg(2+) binding site.

Belongs to the arthropod phospholipase D family. Class II subfamily. Requires Mg(2+) as cofactor. Expressed by the venom gland.

The protein resides in the secreted. The catalysed reaction is an N-(acyl)-sphingosylphosphocholine = an N-(acyl)-sphingosyl-1,3-cyclic phosphate + choline. It catalyses the reaction an N-(acyl)-sphingosylphosphoethanolamine = an N-(acyl)-sphingosyl-1,3-cyclic phosphate + ethanolamine. It carries out the reaction a 1-acyl-sn-glycero-3-phosphocholine = a 1-acyl-sn-glycero-2,3-cyclic phosphate + choline. The enzyme catalyses a 1-acyl-sn-glycero-3-phosphoethanolamine = a 1-acyl-sn-glycero-2,3-cyclic phosphate + ethanolamine. Its function is as follows. Dermonecrotic toxins cleave the phosphodiester linkage between the phosphate and headgroup of certain phospholipids (sphingolipid and lysolipid substrates), forming an alcohol (often choline) and a cyclic phosphate. This toxin acts on sphingomyelin (SM). It may also act on ceramide phosphoethanolamine (CPE), lysophosphatidylcholine (LPC) and lysophosphatidylethanolamine (LPE), but not on lysophosphatidylserine (LPS), and lysophosphatidylglycerol (LPG). It acts by transphosphatidylation, releasing exclusively cyclic phosphate products as second products. Induces dermonecrosis, hemolysis, increased vascular permeability, edema, inflammatory response, and platelet aggregation. The protein is Dermonecrotic toxin LspiSicTox-betaIE4ii of Loxosceles spinulosa (Recluse spider).